We begin with the raw amino-acid sequence, 179 residues long: Large ribosomal subunit protein uL6 (179 aa).

It belongs to the universal ribosomal protein uL6 family. In terms of assembly, part of the 50S ribosomal subunit.

Functionally, this protein binds to the 23S rRNA, and is important in its secondary structure. It is located near the subunit interface in the base of the L7/L12 stalk, and near the tRNA binding site of the peptidyltransferase center. This is Large ribosomal subunit protein uL6 from Syntrophomonas wolfei subsp. wolfei (strain DSM 2245B / Goettingen).